A 376-amino-acid chain; its full sequence is Mitogen-activated protein kinase ERK-A (376 aa).

Positions 38 to 326 (YIKLAYIGEG…VEEALAHPYL (289 aa)) constitute a Protein kinase domain. Residues 44-52 (IGEGAYGMV) and K67 contribute to the ATP site. D162 serves as the catalytic Proton acceptor. The residue at position 198 (T198) is a Phosphothreonine. The TXY motif lies at 198–200 (TEY). Position 200 is a phosphotyrosine (Y200).

It belongs to the protein kinase superfamily. CMGC Ser/Thr protein kinase family. MAP kinase subfamily. Requires Mg(2+) as cofactor. In terms of processing, dually phosphorylated on Thr-198 and Tyr-200, which activates the enzyme. Phosphorylated on tyrosine residue(s) in response to insulin. In third instar larvae, expressed in eye imaginal disks. In adults, expressed in head and body.

Its subcellular location is the cytoplasm. It localises to the nucleus. The enzyme catalyses L-seryl-[protein] + ATP = O-phospho-L-seryl-[protein] + ADP + H(+). It carries out the reaction L-threonyl-[protein] + ATP = O-phospho-L-threonyl-[protein] + ADP + H(+). Activated by tyrosine and threonine phosphorylation. Functionally, serine/threonine kinase which acts as an essential component of the MAP kinase signal transduction pathway to regulate proliferation, differentiation and effect cell fate decisions in various tissues. Required downstream of phl/Raf in the sev/sevenless, tor/torso, and EGF receptor homolog Egfr signal transduction pathways. Required for embryonic epithelial tissue repair. During larval development, mediates Ptth/tor signaling leading to the production of ecdysone, a hormone required for the initiation of metamorphosis. The sequence is that of Mitogen-activated protein kinase ERK-A from Drosophila melanogaster (Fruit fly).